A 555-amino-acid polypeptide reads, in one-letter code: Formate--tetrahydrofolate ligase (555 aa).

63–70 (TPAGEGKT) is an ATP binding site.

It belongs to the formate--tetrahydrofolate ligase family.

The enzyme catalyses (6S)-5,6,7,8-tetrahydrofolate + formate + ATP = (6R)-10-formyltetrahydrofolate + ADP + phosphate. The protein operates within one-carbon metabolism; tetrahydrofolate interconversion. This Beijerinckia indica subsp. indica (strain ATCC 9039 / DSM 1715 / NCIMB 8712) protein is Formate--tetrahydrofolate ligase.